A 338-amino-acid polypeptide reads, in one-letter code: Protein FosB (338 aa).

Disordered regions lie at residues 1–54 (MFQA…PGSF) and 80–179 (AQSQ…RREL). Residues 13-31 (SRCSSSPSAESQYLSSVDS) show a composition bias toward polar residues. At Ser-27 the chain carries Phosphoserine. Residues 123-137 (PSTSTSTSGPVSARP) are compositionally biased toward low complexity. The bZIP domain occupies 155-218 (EEKRRVRRER…ERLEFVLVAH (64 aa)). Residues 157-182 (KRRVRRERNKLAAAKCRNRRRELTDR) form a basic motif region. The interval 183-211 (LQAETDQLEEEKAELESEIAELQKEKERL) is leucine-zipper. Disordered stretches follow at residues 222–276 (CKIP…PPNL) and 315–338 (AGSQ…LLAL). The span at 256-265 (LPPPPPPPLP) shows a compositional bias: pro residues. Residues 266 to 276 (FQSSRDAPPNL) show a composition bias toward polar residues.

This sequence belongs to the bZIP family. Fos subfamily. In terms of assembly, heterodimer; binds to DNA as heterodimer. Component of an AP-1 transcription factor complex; composed of FOS-JUN heterodimers. As part of the AP-1 transcription factor complex, forms heterodimers with JUN, JUNB or JUND, thereby binding to the AP-1 consensus sequence and stimulating transcription. In terms of processing, phosphorylated; phosphorylation is induced by chronic electroconvulsive seizure (ECS) treatment. As to expression, expressed in brain. Expressed in pyramidal cells in CA1 and CA3, in the dentate gyrus and the nucleus accumbens (at protein level).

The protein resides in the nucleus. Heterodimerizes with proteins of the JUN family to form an AP-1 transcription factor complex, thereby enhancing their DNA binding activity to an AP-1 consensus sequence 5'-TGA[GC]TCA-3' and enhancing their transcriptional activity. Exhibits transactivation activity in vitro. As part of the AP-1 complex, facilitates enhancer selection together with cell-type-specific transcription factors by collaboratively binding to nucleosomal enhancers and recruiting the SWI/SNF (BAF) chromatin remodeling complex to establish accessible chromatin. Together with JUN, plays a role in activation-induced cell death of T cells by binding to the AP-1 promoter site of FASLG/CD95L, and inducing its transcription in response to activation of the TCR/CD3 signaling pathway. Involved in the display of nurturing behavior towards newborns. May play a role in neurogenesis in the hippocampus and in learning and memory-related tasks by regulating the expression of various genes involved in neurogenesis, depression and epilepsy. Implicated in behavioral responses related to morphine reward and spatial memory. The sequence is that of Protein FosB from Rattus norvegicus (Rat).